Consider the following 89-residue polypeptide: uncharacterized protein (89 aa).

Residues 1 to 19 (MIVRTLLIAAALLGGTAQA) form the signal peptide.

The protein localises to the secreted. This is an uncharacterized protein from Pseudomonas aeruginosa (strain UCBPP-PA14).